A 578-amino-acid chain; its full sequence is Probable arginine--tRNA ligase, mitochondrial (578 aa).

The N-terminal 16 residues, 1-16 (MACGFRRAIACQLSRV), are a transit peptide targeting the mitochondrion. L-arginine contacts are provided by residues 133–135 (SPN), His-144, Tyr-322, Asp-326, and Gln-350. The 'HIGH' region signature appears at 133 to 144 (SPNVAKKFHVGH). At Lys-568 the chain carries N6-acetyllysine.

Belongs to the class-I aminoacyl-tRNA synthetase family.

It is found in the mitochondrion membrane. It carries out the reaction tRNA(Arg) + L-arginine + ATP = L-arginyl-tRNA(Arg) + AMP + diphosphate. In terms of biological role, catalyzes the attachment of arginine to tRNA(Arg) in a two-step reaction: arginine is first activated by ATP to form Arg-AMP and then transferred to the acceptor end of tRNA(Arg). The protein is Probable arginine--tRNA ligase, mitochondrial (RARS2) of Homo sapiens (Human).